Consider the following 467-residue polypeptide: Asparagine--tRNA ligase (467 aa).

This sequence belongs to the class-II aminoacyl-tRNA synthetase family. As to quaternary structure, homodimer.

The protein resides in the cytoplasm. It catalyses the reaction tRNA(Asn) + L-asparagine + ATP = L-asparaginyl-tRNA(Asn) + AMP + diphosphate + H(+). The protein is Asparagine--tRNA ligase of Actinobacillus pleuropneumoniae serotype 3 (strain JL03).